A 322-amino-acid chain; its full sequence is MKQSKLGVLMVNLGTPDAPTPQAVKRYLAEFLSDRRVVDTSPWLWWPLLRGVILPIRSPRVAKLYQSVWMDEGSPLLVYSRRQQKALAERMPEIPVELGMSYGSPNLPDAIDKLLAQGVTKLVVLPLYPQYSCSTSAAVWDAVARILQGYRRLPSISFIRDYAEHPAYISALKQSVEHSFVQHGKPDRLVLSFHGIPKRYAQLGDDYPQRCEDTSRALRAEIALPAEQIMMTYQSRFGREPWLTPYTDETLKSLPSQGVKHIQLICPGFSADCLETLEEIKEQNREIFLHAGGEKFEYIPALNDDKGHIDLLEQLVRDHLSC.

The Fe cation site is built by His194 and Glu275.

This sequence belongs to the ferrochelatase family.

Its subcellular location is the cytoplasm. It catalyses the reaction heme b + 2 H(+) = protoporphyrin IX + Fe(2+). It participates in porphyrin-containing compound metabolism; protoheme biosynthesis; protoheme from protoporphyrin-IX: step 1/1. Its function is as follows. Catalyzes the ferrous insertion into protoporphyrin IX. The protein is Ferrochelatase of Yersinia enterocolitica serotype O:8 / biotype 1B (strain NCTC 13174 / 8081).